We begin with the raw amino-acid sequence, 98 residues long: UPF0251 protein Sbal_3699 (98 aa).

The protein belongs to the UPF0251 family.

This is UPF0251 protein Sbal_3699 from Shewanella baltica (strain OS155 / ATCC BAA-1091).